The chain runs to 264 residues: Apolipoprotein A-I (264 aa).

An N-terminal signal peptide occupies residues 1 to 18 (MKAVVLAVAVLFLTGSQA). 2 consecutive repeat copies span residues 67 to 88 (LNLLENWDTLSSAFSKLREQLG) and 89 to 110 (HVSQEFWDTFEKDTAWLREEMN). The tract at residues 67–264 (LNLLENWDTL…DQITKHVTTQ (198 aa)) is 10 X approximate tandem repeats. Methionine 109 bears the Methionine sulfoxide mark. A 3; half-length repeat occupies 111-121 (KDLEKVKKKVQ). 3 consecutive repeat copies span residues 122-143 (PFLDSFQEKMQEEVKRYRHKVE), 144-165 (PLSLELRDGAHQQLKELQEKLG), and 166-187 (PLGKDLKDHALVHMDELRSHLR). A 7; truncated repeat occupies 188–207 (TYTEEMGQILAERLGAIKES). The residue at position 193 (methionine 193) is a Methionine sulfoxide. Repeat 8 spans residues 208–229 (TSLAEYQTKASEHLRTFSKKAK). The 9; half-length repeat unit spans residues 230–240 (PILEDLRQGLL). Repeat 10 spans residues 241–264 (PVAENFKTNIKNTFDQITKHVTTQ).

This sequence belongs to the apolipoprotein A1/A4/E family. As to quaternary structure, homodimer. Interacts with APOA1BP and CLU. Component of a sperm activating protein complex (SPAP), consisting of APOA1, an immunoglobulin heavy chain, an immunoglobulin light chain and albumin. Interacts with NDRG1. Interacts with SCGB3A2. Interacts with NAXE and YJEFN3. Post-translationally, glycosylated. In terms of processing, palmitoylated. Phosphorylation sites are present in the extracellular medium.

It localises to the secreted. Its function is as follows. Participates in the reverse transport of cholesterol from tissues to the liver for excretion by promoting cholesterol efflux from tissues and by acting as a cofactor for the lecithin cholesterol acyltransferase (LCAT). As part of the SPAP complex, activates spermatozoa motility. This is Apolipoprotein A-I (Apoa1) from Fukomys damarensis (Damaraland mole rat).